A 234-amino-acid chain; its full sequence is Enolase-phosphatase E1 (234 aa).

Residues Asp-10 and Glu-12 each coordinate Mg(2+). Substrate contacts are provided by residues 125–126 and Lys-162; that span reads SS. Mg(2+) is bound at residue Asp-188.

It belongs to the HAD-like hydrolase superfamily. MasA/MtnC family. In terms of assembly, monomer. Mg(2+) is required as a cofactor.

It localises to the cytoplasm. It is found in the nucleus. The enzyme catalyses 5-methylsulfanyl-2,3-dioxopentyl phosphate + H2O = 1,2-dihydroxy-5-(methylsulfanyl)pent-1-en-3-one + phosphate. The protein operates within amino-acid biosynthesis; L-methionine biosynthesis via salvage pathway; L-methionine from S-methyl-5-thio-alpha-D-ribose 1-phosphate: step 3/6. Its pathway is amino-acid biosynthesis; L-methionine biosynthesis via salvage pathway; L-methionine from S-methyl-5-thio-alpha-D-ribose 1-phosphate: step 4/6. Its function is as follows. Bifunctional enzyme that catalyzes the enolization of 2,3-diketo-5-methylthiopentyl-1-phosphate (DK-MTP-1-P) into the intermediate 2-hydroxy-3-keto-5-methylthiopentenyl-1-phosphate (HK-MTPenyl-1-P), which is then dephosphorylated to form the acireductone 1,2-dihydroxy-3-keto-5-methylthiopentene (DHK-MTPene). This is Enolase-phosphatase E1 (utr4) from Neurospora crassa (strain ATCC 24698 / 74-OR23-1A / CBS 708.71 / DSM 1257 / FGSC 987).